A 234-amino-acid polypeptide reads, in one-letter code: Fibroblast growth factor-binding protein 1 (234 aa).

Positions 1–23 are cleaved as a signal peptide; that stretch reads MRTHGLTLLSLLLLAVPMLLVEA. The segment at 25–59 is disordered; the sequence is KEGRNRRGSKASADESLALGKPGKEPRSQPTNYPI. 3 cysteine pairs are disulfide-bonded: Cys-71–Cys-88, Cys-97–Cys-130, and Cys-106–Cys-142. Asn-155 is a glycosylation site (N-linked (GlcNAc...) asparagine). The interval 169–200 is disordered; it reads MEPSPMDTVEVTTSSSPEKTQTMATKDPQCEE. Ser-172 is a glycosylation site (O-linked (GalNAc...) serine). A compositionally biased stretch (polar residues) spans 178–192; it reads EVTTSSSPEKTQTMA. The segment at 194 to 234 is sufficient for interaction with FGF2 and FGF2-induced effects; that stretch reads KDPQCEEEDLKNQRKAALEYCGETWGSLCNFFLSMVQGSSC. Intrachain disulfides connect Cys-198–Cys-234 and Cys-214–Cys-222.

This sequence belongs to the fibroblast growth factor-binding protein family. In terms of assembly, found in a complex with FGFBP1, FGF1 and FGF2. Interacts with FGF1, FGF7, FGF10, FGF22 and HSPG2. Interacts with FGF2.

It is found in the secreted. The protein resides in the extracellular space. It localises to the cell membrane. Acts as a carrier protein that release fibroblast-binding factors (FGFs) from the extracellular matrix (EM) storage and thus enhance the mitogenic activity of FGFs. Enhances FGF2 signaling during tissue repair, angiogenesis and in tumor growth. The polypeptide is Fibroblast growth factor-binding protein 1 (FGFBP1) (Bos taurus (Bovine)).